Consider the following 142-residue polypeptide: Transcription antitermination protein NusB (142 aa).

The protein belongs to the NusB family.

Functionally, involved in transcription antitermination. Required for transcription of ribosomal RNA (rRNA) genes. Binds specifically to the boxA antiterminator sequence of the ribosomal RNA (rrn) operons. The polypeptide is Transcription antitermination protein NusB (Levilactobacillus brevis (strain ATCC 367 / BCRC 12310 / CIP 105137 / JCM 1170 / LMG 11437 / NCIMB 947 / NCTC 947) (Lactobacillus brevis)).